Here is a 297-residue protein sequence, read N- to C-terminus: Putative thiosulfate sulfurtransferase SseA (297 aa).

Rhodanese domains are found at residues 31-138 (GAPG…ETTL) and 168-286 (ILGA…VPIV). Cysteine 245 acts as the Cysteine persulfide intermediate in catalysis. Arginine 250 contributes to the substrate binding site.

The catalysed reaction is thiosulfate + hydrogen cyanide = thiocyanate + sulfite + 2 H(+). The polypeptide is Putative thiosulfate sulfurtransferase SseA (sseA) (Mycobacterium tuberculosis (strain CDC 1551 / Oshkosh)).